A 382-amino-acid chain; its full sequence is MNSTLFSKVENHSIHYNASENSPLLAFENDDCHLPLAVIFTLALAYGAVIILGVSGNLALIIIILKQKEMRNVTNILIVNLSFSDLLVAVMCLPFTFVYTLMDHWVFGETMCKLNPFVQCVSITVSIFSLVLIAVERHQLIINPRGWRPNNRHAYIGITVIWVLAVASSLPFVIYQILTDEPFQNVSLAAFKDKYVCFDKFPSDSHRLSYTTLLLVLQYFGPLCFIFICYFKIYIRLKRRNNMMDKIRDSKYRSSETKRINIMLLSIVVAFAVCWLPLTIFNTVFDWNHQIIATCNHNLLFLLCHLTAMISTCVNPIFYGFLNKNFQRDLQFFFNFCDFRSRDDDYETIAMSTMHTDVSKTSLKQASPVAFKKISMNDNEKV.

The Extracellular portion of the chain corresponds to 1-33; sequence MNSTLFSKVENHSIHYNASENSPLLAFENDDCH. 3 N-linked (GlcNAc...) asparagine glycosylation sites follow: N2, N11, and N17. Residues 34-54 traverse the membrane as a helical segment; it reads LPLAVIFTLALAYGAVIILGV. The Cytoplasmic segment spans residues 55–75; that stretch reads SGNLALIIIILKQKEMRNVTN. The helical transmembrane segment at 76 to 96 threads the bilayer; sequence ILIVNLSFSDLLVAVMCLPFT. The Extracellular portion of the chain corresponds to 97–115; sequence FVYTLMDHWVFGETMCKLN. An intrachain disulfide couples C112 to C197. The chain crosses the membrane as a helical span at residues 116–136; sequence PFVQCVSITVSIFSLVLIAVE. Topologically, residues 137–153 are cytoplasmic; it reads RHQLIINPRGWRPNNRH. A helical transmembrane segment spans residues 154–174; it reads AYIGITVIWVLAVASSLPFVI. The Extracellular portion of the chain corresponds to 175-210; sequence YQILTDEPFQNVSLAAFKDKYVCFDKFPSDSHRLSY. A helical membrane pass occupies residues 211–231; it reads TTLLLVLQYFGPLCFIFICYF. Residues 232 to 259 are Cytoplasmic-facing; that stretch reads KIYIRLKRRNNMMDKIRDSKYRSSETKR. Residues 260–280 form a helical membrane-spanning segment; sequence INIMLLSIVVAFAVCWLPLTI. Topologically, residues 281 to 298 are extracellular; the sequence is FNTVFDWNHQIIATCNHN. Residues 299-319 traverse the membrane as a helical segment; that stretch reads LLFLLCHLTAMISTCVNPIFY. The Cytoplasmic segment spans residues 320-382; the sequence is GFLNKNFQRD…KISMNDNEKV (63 aa). C337 is lipidated: S-palmitoyl cysteine. Phosphoserine occurs at positions 367 and 375.

It belongs to the G-protein coupled receptor 1 family. As to expression, the alpha form is highly expressed in the brain, heart, kidney, spleen, skeletal muscle, and lung, whereas the beta receptor mRNA was not detected in these tissues. However, the beta form is expressed in mouse embryonic developmental stage (7 and 11 days), bone marrow cells and several hematopoietic cell lines.

The protein resides in the cell membrane. Its function is as follows. Receptor for neuropeptide Y and peptide YY. The chain is Neuropeptide Y receptor type 1 (Npy1r) from Mus musculus (Mouse).